We begin with the raw amino-acid sequence, 146 residues long: Ribonuclease P protein component (146 aa).

The protein belongs to the RnpA family. In terms of assembly, consists of a catalytic RNA component (M1 or rnpB) and a protein subunit.

The catalysed reaction is Endonucleolytic cleavage of RNA, removing 5'-extranucleotides from tRNA precursor.. Functionally, RNaseP catalyzes the removal of the 5'-leader sequence from pre-tRNA to produce the mature 5'-terminus. It can also cleave other RNA substrates such as 4.5S RNA. The protein component plays an auxiliary but essential role in vivo by binding to the 5'-leader sequence and broadening the substrate specificity of the ribozyme. This Chlorobium phaeobacteroides (strain DSM 266 / SMG 266 / 2430) protein is Ribonuclease P protein component.